Reading from the N-terminus, the 149-residue chain is Calmodulin (149 aa).

Residue A2 is modified to N-acetylalanine. EF-hand domains lie at 8–43 (EQIAEFKEAFSLFDKDGDGTITTKELGTVMRSLGQN), 44–79 (PTEAELQDMINEVNADGNGTIDFPEFLTMMARKMKD), 81–116 (DSEEEIREAFRVFDKDGNGYISAAELRHVMTNLGEK), and 117–149 (LTDEEVDEMIREADIDGDGQVNYEEFVQMMTAK). The Ca(2+) site is built by D21, D23, D25, T27, E32, D59, N61, T63, E68, D94, D96, N98, Y100, and E105. The residue at position 116 (K116) is an N6,N6,N6-trimethyllysine. Ca(2+) is bound by residues D130, D132, D134, Q136, and E141.

It belongs to the calmodulin family.

Functionally, calmodulin acts as part of a calcium signal transduction pathway by mediating the control of a large number of enzymes, ion channels, aquaporins and other proteins through calcium-binding. Calcium-binding is required for the activation of calmodulin. Among the enzymes to be stimulated by the calmodulin-calcium complex are a number of protein kinases, such as myosin light-chain kinases and calmodulin-dependent protein kinase type II (CaMK2), and phosphatases. This Myxine glutinosa (Atlantic hagfish) protein is Calmodulin.